Consider the following 1443-residue polypeptide: MEEELAIEDLPRLTGTVSLNNGLLHSIYNETTVFKILRWSLVEIPKYILKLMSKNLEINLNVSSILIITLLIAAGILVIVRYKFLTGYSEDIKKGGSNANTKALGQQSTNYPKSTSSGLFVEKSKDKKPSNYLDEFLMAIKVFGYLDKQVFHELTKSMTTQKLSRDEVMCLDEKIGFLIVVEGTAQVYTKVTKKSNRNKYDELGQNGRDEGEEADEDDEEEEKEVGDDGDDEMDVEAMRNRGNGTKNGKMHGLDTDNFEENDDFLKLGEQNYQLLNEVKSGAALSSLISTLDLFKPLKSESTLTPLDSMGSGVSLNLDYLDRAGARLKALENDSDADTRDSTYPDIIVRPKKKKHSDTITVAIIPQSAFERVQMKYPKSTSHIVTMVLTRLYKVTMTTIHNYLGLTGEIFKLEIELNKSCELGLPRYLVDGLIERLSQGGSNERKQQAKHFRRSPLERTQSRYVLLNSRVKSNNPGDLLSSVPISRDDPKLRVNKSSAPTLVDGSNRINFTDNIEETEENSLRIAIIENIFKIVGINEAQNLPHEQAPFRSLNSSANSSSIALNSPGYFSPNLPATTGRHHNVLKFSSNDSLMNTISLSQLKSQKTHSISRGSTTQKQLYKRRNPITEMNIKDAFAKVMELKYIEPNTTVVQQNSVFCGLYYVINGSLEVHYKQAETYSKSATSKHVYTVGAGGIAGYMSCVVGFRSLVSIKTPKKTGAVVAYIAKNDYNQLLDKFYFLQLPMATKLKSLLSKQVMTIDYALEWCHIPAGNVLCSQGDLANGFHVVLSGRFRVVRKEKRKGSNRDEVKVLGEYGHGESIGEVEVLTASRRSNSLIAVRDSETARIPRTLFEILSFQNPSIMVKVSRLVASKVLSSEKTLSQATHSFITSSSNESFISADYKTITILPTVSGLPVRDFADKLVHSLKAIGRNVIALDQALTLTHLGRHAFDESLVRLKLSGYFAYLEEEYETVVYICDTPVQSNWTSTCISQGDCVLLLADADDQYTASSVGEYEQLLIKMKTTARTDLCLIHQEKFVVSGSTSRWLKNRMWVQGHHHIQMYIERNNETIGPGKKSFINEMAAKFVQNKSLISKFEEARSKALSWRREEQLKDLTLGSHKSDFLRLARILSNEAVGLVLGGGGSRGISHVGVVTALERHGIPVDLIGGTSIGSFVGGLYAKDYNIVSIYGRAKKFSKRVSSVWRMIFDLTYPVTSYITGYEFNRGIWKVFGFTEIEDFWIKYFCNSTNITNSTMDIHESGYAWRFIRASMSLAGLLPPIAFKGCMLLDGGYLDNLPVMEMKRRGAKHIFAVDVGSVDDRTPMDYGDTLSGFWVVFNKWNPFSKHPNVPNMMDIQLRLAYVASVNALEEAKRTPGVYYLRPPIDNYATLDFGKFDEIYQVGLGYADKLFTEWENKKQLPEIAGFVKRDGMQNGGERIKMYRRNTM.

Residues 1 to 59 lie on the Lumenal side of the membrane; it reads MEEELAIEDLPRLTGTVSLNNGLLHSIYNETTVFKILRWSLVEIPKYILKLMSKNLEIN. A helical transmembrane segment spans residues 60-80; the sequence is LNVSSILIITLLIAAGILVIV. At 81–1443 the chain is on the cytoplasmic side; it reads RYKFLTGYSE…RIKMYRRNTM (1363 aa). Polar residues predominate over residues 103 to 118; the sequence is ALGQQSTNYPKSTSSG. Disordered stretches follow at residues 103–122 and 199–251; these read ALGQ…LFVE and KYDE…GKMH. A compositionally biased stretch (acidic residues) spans 210–235; the sequence is EGEEADEDDEEEEKEVGDDGDDEMDV. A nucleoside 3',5'-cyclic phosphate-binding positions include 619 to 750 and 746 to 871; these read LYKR…LKSL and KLKS…VASK. Residues 1136–1300 enclose the PNPLA domain; it reads LVLGGGGSRG…LDNLPVMEMK (165 aa). A GXGXXG motif is present at residues 1140-1145; that stretch reads GGGSRG. The GXSXG signature appears at 1167–1171; that stretch reads GTSIG. The Nucleophile role is filled by Ser-1169. The Proton acceptor role is filled by Asp-1287. The DGA/G signature appears at 1287-1289; it reads DGG.

This sequence belongs to the NTE family.

Its subcellular location is the endoplasmic reticulum membrane. It carries out the reaction a 1-acyl-sn-glycero-3-phosphocholine + H2O = sn-glycerol 3-phosphocholine + a fatty acid + H(+). Inhibited by organophosphorus esters. In terms of biological role, intracellular phospholipase B that catalyzes the double deacylation of phosphatidylcholine (PC) to glycerophosphocholine (GroPCho). Plays an important role in membrane lipid homeostasis. Responsible for the rapid PC turnover in response to inositol, elevated temperatures, or when choline is present in the growth medium. The sequence is that of Lysophospholipase NTE1 (NTE1) from Lodderomyces elongisporus (strain ATCC 11503 / CBS 2605 / JCM 1781 / NBRC 1676 / NRRL YB-4239) (Yeast).